Consider the following 298-residue polypeptide: Glycine--tRNA ligase alpha subunit (298 aa).

This sequence belongs to the class-II aminoacyl-tRNA synthetase family. In terms of assembly, tetramer of two alpha and two beta subunits.

The protein resides in the cytoplasm. The enzyme catalyses tRNA(Gly) + glycine + ATP = glycyl-tRNA(Gly) + AMP + diphosphate. The sequence is that of Glycine--tRNA ligase alpha subunit from Helicobacter pylori (strain P12).